The sequence spans 266 residues: MTDVQKILKIVKQHMFKPKQTLARNEYKEAIVVPLGINEVQDLSDFTEEEKQLLINNDGWDVATLEQVYQFIMKTASWMASSHGGQSAPPPMSYFRQQQQPLPPQQRIYPQLNQTTTLQPQPQQPIIVNPIPAPAPAPATNNNNSLCSRYQICDIGSLQGVNDENLVFFYPSHTLMDKTKLLSVVLNFSNPVVGEYKVQMVNALNTTSPPRDIHKFTGTKSNVIVISLSEVLTTQNSVYFKMTPTPVDAKGNRPLIRMQVSMECSK.

Belongs to the ascovirus HvAV ORF59 family.

This is an uncharacterized protein from Trichoplusia ni ascovirus 2c (TnAV-2c).